A 365-amino-acid polypeptide reads, in one-letter code: 3-dehydroquinate synthase (365 aa).

Residues 69 to 74 (DGEAHK), 103 to 107 (GVIGD), 127 to 128 (TT), K140, and K149 each bind NAD(+). Residues E182, H245, and H262 each contribute to the Zn(2+) site.

This sequence belongs to the sugar phosphate cyclases superfamily. Dehydroquinate synthase family. Co(2+) serves as cofactor. It depends on Zn(2+) as a cofactor. NAD(+) is required as a cofactor.

It localises to the cytoplasm. It carries out the reaction 7-phospho-2-dehydro-3-deoxy-D-arabino-heptonate = 3-dehydroquinate + phosphate. It participates in metabolic intermediate biosynthesis; chorismate biosynthesis; chorismate from D-erythrose 4-phosphate and phosphoenolpyruvate: step 2/7. Functionally, catalyzes the conversion of 3-deoxy-D-arabino-heptulosonate 7-phosphate (DAHP) to dehydroquinate (DHQ). The sequence is that of 3-dehydroquinate synthase from Pseudomonas putida (strain ATCC 700007 / DSM 6899 / JCM 31910 / BCRC 17059 / LMG 24140 / F1).